The following is a 295-amino-acid chain: Probable aspartoacylase (295 aa).

Zn(2+)-binding residues include His16 and Glu19. Residues Arg58 and 65 to 66 (NR) each bind substrate. His107 contacts Zn(2+). Positions 166 and 277 each coordinate substrate.

It belongs to the AspA/AstE family. Aspartoacylase subfamily. The cofactor is Zn(2+).

It catalyses the reaction an N-acyl-L-aspartate + H2O = a carboxylate + L-aspartate. The chain is Probable aspartoacylase from Acaryochloris marina (strain MBIC 11017).